Consider the following 227-residue polypeptide: 6-phosphogluconolactonase (227 aa).

This sequence belongs to the glucosamine/galactosamine-6-phosphate isomerase family. 6-phosphogluconolactonase subfamily.

It catalyses the reaction 6-phospho-D-glucono-1,5-lactone + H2O = 6-phospho-D-gluconate + H(+). It functions in the pathway carbohydrate degradation; pentose phosphate pathway; D-ribulose 5-phosphate from D-glucose 6-phosphate (oxidative stage): step 2/3. Functionally, hydrolysis of 6-phosphogluconolactone to 6-phosphogluconate. This is 6-phosphogluconolactonase (pgl) from Helicobacter pylori (strain ATCC 700392 / 26695) (Campylobacter pylori).